The sequence spans 898 residues: Filament-like plant protein 7 (898 aa).

Coiled coils occupy residues Glu-23–Ala-224 and Glu-287–Ser-320. Disordered stretches follow at residues Asp-429 to Ser-482, Pro-693 to Glu-723, and Lys-777 to Ser-835. Residues Ser-434–Glu-459 are compositionally biased toward low complexity. A compositionally biased stretch (polar residues) spans Ala-460 to Ser-469. Residues Val-703–Ala-764 adopt a coiled-coil conformation. Residues Met-808–Lys-822 are compositionally biased toward basic and acidic residues.

It belongs to the FPP family. Interacts with WPP/MAF proteins.

This is Filament-like plant protein 7 (FPP7) from Arabidopsis thaliana (Mouse-ear cress).